The primary structure comprises 638 residues: Chaperone protein DnaK (638 aa).

Threonine 198 is modified (phosphothreonine; by autocatalysis). Residues 599–638 (IYESQQAEGGAEGGPSGHHDDGIVDADYEEVKDDNTKKSA) form a disordered region. Residues 621–630 (IVDADYEEVK) show a composition bias toward acidic residues.

This sequence belongs to the heat shock protein 70 family.

Its function is as follows. Acts as a chaperone. The chain is Chaperone protein DnaK from Allorhizobium ampelinum (strain ATCC BAA-846 / DSM 112012 / S4) (Agrobacterium vitis (strain S4)).